A 454-amino-acid chain; its full sequence is MELKPNVKEIPGPKARKVIEEHHKYMATTTNDPNEYFLVIERAEGVYWIDVDGNVLLDFSSGIGVMNVGLRNPKVIEAIKKQLDLVLHAAGTDYYNPYQVELAKKLVEIAPGDIERKVFLSNSGTEANEAALKIAKWSTNRKMFIAFIGAFHGRTHGTMSLTASKPVQRSRMFPTMPGVVHVPYPNPYRNPWGIDGYENPDELINRVIDYIEEYLFEHYVPAEEVAGIFFEPIQGEGGYVVPPKNFFKELKKLADKHGILLIDDEVQMGMGRTGRMWAIEHFDIVPDIVTVAKALGGGIPIGATIFRADLDFGVSGVHSNTFGGNTVAAAAALAVIEELQNGLIENAQKLEPLFRERLEEMKEKYEIIGDVRGLGLAWGVEFVKDRKTKEYATKERGEIVVEALKRGLALLGCGKSAIRLIPPLIISEEEAKMGLDIFEEAIKVVSERHGYKIH.

Residues Gly-124, Thr-125, and Gln-267 each coordinate pyridoxal 5'-phosphate. Position 293 is an N6-(pyridoxal phosphate)lysine (Lys-293). Thr-321 is a pyridoxal 5'-phosphate binding site.

Belongs to the class-III pyridoxal-phosphate-dependent aminotransferase family. Homotetramer; dimer of dimers. Requires pyridoxal 5'-phosphate as cofactor.

The catalysed reaction is L-ornithine + 2-oxoglutarate = L-glutamate 5-semialdehyde + L-glutamate. It catalyses the reaction L-lysine + 2-oxoglutarate = (S)-2-amino-6-oxohexanoate + L-glutamate. In terms of biological role, catalyzes the conversion of L-ornithine and 2-oxoglutarate to L-glutamate semialdehyde and L-glutamate. L-ornithine is the best substrate, but the enzyme also shows good activity toward L-lysine, and low activity toward D-ornithine, D-lysine, 5-aminovalerate, 6-aminohexanoate and GABA. The enzyme activity is specific for 2-oxoglutarate. In Pyrococcus horikoshii (strain ATCC 700860 / DSM 12428 / JCM 9974 / NBRC 100139 / OT-3), this protein is Ornithine aminotransferase.